We begin with the raw amino-acid sequence, 428 residues long: Histidine--tRNA ligase (428 aa).

Belongs to the class-II aminoacyl-tRNA synthetase family. As to quaternary structure, homodimer.

It localises to the cytoplasm. The catalysed reaction is tRNA(His) + L-histidine + ATP = L-histidyl-tRNA(His) + AMP + diphosphate + H(+). The protein is Histidine--tRNA ligase of Lactobacillus helveticus (strain DPC 4571).